Reading from the N-terminus, the 324-residue chain is Putative GTPase PYRAB02490 (324 aa).

GTP is bound by residues 52–60 (GPPGAGKST), D194, and 229–231 (VAT).

This sequence belongs to the SIMIBI class G3E GTPase family. ArgK/MeaB subfamily.

Functionally, may have GTPase activity. May also bind and hydrolyze ATP. May function as chaperone. This chain is Putative GTPase PYRAB02490, found in Pyrococcus abyssi (strain GE5 / Orsay).